Consider the following 218-residue polypeptide: Ribose-5-phosphate isomerase A (218 aa).

Residues 28-31 (TGST), 81-84 (DGAD), and 94-97 (KGGG) each bind substrate. Catalysis depends on E103, which acts as the Proton acceptor. K121 serves as a coordination point for substrate.

It belongs to the ribose 5-phosphate isomerase family. Homodimer.

The enzyme catalyses aldehydo-D-ribose 5-phosphate = D-ribulose 5-phosphate. It functions in the pathway carbohydrate degradation; pentose phosphate pathway; D-ribose 5-phosphate from D-ribulose 5-phosphate (non-oxidative stage): step 1/1. Functionally, catalyzes the reversible conversion of ribose-5-phosphate to ribulose 5-phosphate. The polypeptide is Ribose-5-phosphate isomerase A (Colwellia psychrerythraea (strain 34H / ATCC BAA-681) (Vibrio psychroerythus)).